The following is a 102-amino-acid chain: Small ribosomal subunit protein uS10 (102 aa).

This sequence belongs to the universal ribosomal protein uS10 family. In terms of assembly, part of the 30S ribosomal subunit.

Involved in the binding of tRNA to the ribosomes. This Symbiobacterium thermophilum (strain DSM 24528 / JCM 14929 / IAM 14863 / T) protein is Small ribosomal subunit protein uS10.